The following is a 511-amino-acid chain: cAMP-regulated M3L protein (511 aa).

To D.discoideum protein M3R.

This chain is cAMP-regulated M3L protein (prtA), found in Dictyostelium discoideum (Social amoeba).